The primary structure comprises 228 residues: MTAELNFLDLFLKASIVVQLVIVILISFSIISWAIIIQRSRILTNALKEARTFEDRFWSGEDLNKLYEGLSNRRDGLTGSEQIFCVGFKEFSRLKQVNPDAPEAIIKGTMRAMNLAMNREIESLENRVPFLATVASVSPYIGLFGTVWGIMHAFMALSGAKQATLQMVAPGIAEALIATAIGLFAAIPAVMAYNRLSLRVNAIEQDYGNFIDEFTTILHRQAFGKAPH.

Helical transmembrane passes span 16-36 (IVVQ…WAII), 137-157 (VSPY…FMAL), and 172-192 (IAEA…AVMA).

It belongs to the ExbB/TolQ family. In terms of assembly, the Tol-Pal system is composed of five core proteins: the inner membrane proteins TolA, TolQ and TolR, the periplasmic protein TolB and the outer membrane protein Pal. They form a network linking the inner and outer membranes and the peptidoglycan layer.

It localises to the cell inner membrane. Its function is as follows. Part of the Tol-Pal system, which plays a role in outer membrane invagination during cell division and is important for maintaining outer membrane integrity. The polypeptide is Tol-Pal system protein TolQ (Haemophilus influenzae (strain ATCC 51907 / DSM 11121 / KW20 / Rd)).